The sequence spans 688 residues: DNA ligase (688 aa).

NAD(+)-binding positions include 38 to 42 (DEEYD), 87 to 88 (SL), and glutamate 118. Residue lysine 120 is the N6-AMP-lysine intermediate of the active site. The NAD(+) site is built by arginine 141, glutamate 175, lysine 291, and lysine 315. 4 residues coordinate Zn(2+): cysteine 409, cysteine 412, cysteine 428, and cysteine 433. The region spanning 590–679 (VKLDILRGLT…AELKGYNFDE (90 aa)) is the BRCT domain.

The protein belongs to the NAD-dependent DNA ligase family. LigA subfamily. It depends on Mg(2+) as a cofactor. The cofactor is Mn(2+).

The enzyme catalyses NAD(+) + (deoxyribonucleotide)n-3'-hydroxyl + 5'-phospho-(deoxyribonucleotide)m = (deoxyribonucleotide)n+m + AMP + beta-nicotinamide D-nucleotide.. Its function is as follows. DNA ligase that catalyzes the formation of phosphodiester linkages between 5'-phosphoryl and 3'-hydroxyl groups in double-stranded DNA using NAD as a coenzyme and as the energy source for the reaction. It is essential for DNA replication and repair of damaged DNA. This is DNA ligase from Thermotoga maritima (strain ATCC 43589 / DSM 3109 / JCM 10099 / NBRC 100826 / MSB8).